Here is a 206-residue protein sequence, read N- to C-terminus: ATP phosphoribosyltransferase (206 aa).

Belongs to the ATP phosphoribosyltransferase family. Short subfamily. As to quaternary structure, heteromultimer composed of HisG and HisZ subunits.

It localises to the cytoplasm. It catalyses the reaction 1-(5-phospho-beta-D-ribosyl)-ATP + diphosphate = 5-phospho-alpha-D-ribose 1-diphosphate + ATP. The protein operates within amino-acid biosynthesis; L-histidine biosynthesis; L-histidine from 5-phospho-alpha-D-ribose 1-diphosphate: step 1/9. Its function is as follows. Catalyzes the condensation of ATP and 5-phosphoribose 1-diphosphate to form N'-(5'-phosphoribosyl)-ATP (PR-ATP). Has a crucial role in the pathway because the rate of histidine biosynthesis seems to be controlled primarily by regulation of HisG enzymatic activity. This is ATP phosphoribosyltransferase from Wolinella succinogenes (strain ATCC 29543 / DSM 1740 / CCUG 13145 / JCM 31913 / LMG 7466 / NCTC 11488 / FDC 602W) (Vibrio succinogenes).